The primary structure comprises 279 residues: Phosphonates import ATP-binding protein PhnC (279 aa).

The 244-residue stretch at 2-245 (FQLKNVTRQF…AVAAIYGAET (244 aa)) folds into the ABC transporter domain. ATP is bound at residue 34 to 41 (GRSGAGKS).

This sequence belongs to the ABC transporter superfamily. Phosphonates importer (TC 3.A.1.9.1) family. The complex is composed of two ATP-binding proteins (PhnC), two transmembrane proteins (PhnE) and a solute-binding protein (PhnD).

It is found in the cell inner membrane. It carries out the reaction phosphonate(out) + ATP + H2O = phosphonate(in) + ADP + phosphate + H(+). In terms of biological role, part of the ABC transporter complex PhnCDE involved in phosphonates import. Responsible for energy coupling to the transport system. This is Phosphonates import ATP-binding protein PhnC from Rhizobium meliloti (strain 1021) (Ensifer meliloti).